Consider the following 86-residue polypeptide: MNTFFQIMTQTEFFATGLAYLGAGISILAAGLAGIGQGLAAARAVEAVGRQPEASGKITVTMILGQAMVETSGIYALIIAFILSSK.

2 consecutive transmembrane segments (helical) span residues 13–33 (FFAT…AGLA) and 63–83 (ILGQ…AFIL).

This sequence belongs to the ATPase C chain family. As to quaternary structure, F-type ATPases have 2 components, F(1) - the catalytic core - and F(0) - the membrane proton channel. F(1) has five subunits: alpha(3), beta(3), gamma(1), delta(1), epsilon(1). F(0) has three main subunits: a(1), b(2) and c(10-14). The alpha and beta chains form an alternating ring which encloses part of the gamma chain. F(1) is attached to F(0) by a central stalk formed by the gamma and epsilon chains, while a peripheral stalk is formed by the delta and b chains.

It is found in the cell membrane. Its function is as follows. F(1)F(0) ATP synthase produces ATP from ADP in the presence of a proton or sodium gradient. F-type ATPases consist of two structural domains, F(1) containing the extramembraneous catalytic core and F(0) containing the membrane proton channel, linked together by a central stalk and a peripheral stalk. During catalysis, ATP synthesis in the catalytic domain of F(1) is coupled via a rotary mechanism of the central stalk subunits to proton translocation. In terms of biological role, key component of the F(0) channel; it plays a direct role in translocation across the membrane. A homomeric c-ring of between 10-14 subunits forms the central stalk rotor element with the F(1) delta and epsilon subunits. The sequence is that of ATP synthase subunit c from Acholeplasma laidlawii (strain PG-8A).